We begin with the raw amino-acid sequence, 724 residues long: Membrane protein YdfJ (724 aa).

The next 12 helical transmembrane spans lie at 17–37 (IKAI…AVTL), 179–199 (IVGI…LLIA), 200–220 (GLPI…VLIG), 231–251 (LSLA…FIFT), 277–297 (AVVF…VVNI), 309–329 (LSVL…LSIA), 360–380 (IMLS…SMHL), 512–532 (AIPV…TIVF), 539–559 (LVAV…CVFV), 575–595 (GPIL…LAMD), 627–647 (PVVT…IFAG), and 655–675 (GLAL…TLIP).

It belongs to the resistance-nodulation-cell division (RND) (TC 2.A.6) family. MmpL subfamily.

It localises to the cell membrane. This chain is Membrane protein YdfJ (ydfJ), found in Bacillus subtilis (strain 168).